The chain runs to 108 residues: MDMLHNKCSDAIKSTSNSNLSNEVDKQKLQYDDLGNTGFSELFEMESQDNNDSIEDFLFFNINLTQEVEFENQRQYEHTKKTKKHNPFYVPSEVVREMVKKHALNGRI.

Positions 1 to 10 are enriched in basic and acidic residues; sequence MDMLHNKCSD. The segment at 1–27 is disordered; sequence MDMLHNKCSDAIKSTSNSNLSNEVDKQ. The segment covering 12 to 22 has biased composition (polar residues); that stretch reads IKSTSNSNLSN.

This is an uncharacterized protein from Saccharomyces cerevisiae (strain ATCC 204508 / S288c) (Baker's yeast).